The sequence spans 204 residues: MANPIKIGIGGPVGAGKTQLIEKVVKRLSKEMSIGVITNDIYTKEDEKILVNSGVLPESRIIGVETGGCPHTAIREDASMNFAAIDELLERHDDIELIFIESGGDNLAATFSPELVDFSIYIIDVAQGEKIPRKGGQGMIKSDFFIINKTDLAPYVGASLEQMAEDTKVFRGKRPFTFTNLKTDEGLDEVIDWIERDTLLKGLS.

11–18 (GPVGAGKT) contacts GTP.

The protein belongs to the SIMIBI class G3E GTPase family. UreG subfamily. As to quaternary structure, homodimer. UreD, UreF and UreG form a complex that acts as a GTP-hydrolysis-dependent molecular chaperone, activating the urease apoprotein by helping to assemble the nickel containing metallocenter of UreC. The UreE protein probably delivers the nickel.

The protein localises to the cytoplasm. Functionally, facilitates the functional incorporation of the urease nickel metallocenter. This process requires GTP hydrolysis, probably effectuated by UreG. In Staphylococcus aureus (strain MSSA476), this protein is Urease accessory protein UreG.